Reading from the N-terminus, the 476-residue chain is Glycogen synthase (476 aa).

Lys15 serves as a coordination point for ADP-alpha-D-glucose.

It belongs to the glycosyltransferase 1 family. Bacterial/plant glycogen synthase subfamily.

It carries out the reaction [(1-&gt;4)-alpha-D-glucosyl](n) + ADP-alpha-D-glucose = [(1-&gt;4)-alpha-D-glucosyl](n+1) + ADP + H(+). Its pathway is glycan biosynthesis; glycogen biosynthesis. In terms of biological role, synthesizes alpha-1,4-glucan chains using ADP-glucose. The polypeptide is Glycogen synthase (Bacillus cereus (strain Q1)).